The sequence spans 268 residues: UPF0719 transmembrane protein aq_1349 (268 aa).

8 helical membrane-spanning segments follow: residues Leu-5 to Arg-24, Asn-37 to Tyr-59, Leu-69 to Arg-91, Ala-104 to Trp-126, Ser-130 to Ser-152, Phe-173 to Ser-195, Val-210 to Phe-232, and Asn-245 to Met-267.

Belongs to the UPF0719 family.

Its subcellular location is the cell membrane. In Aquifex aeolicus (strain VF5), this protein is UPF0719 transmembrane protein aq_1349.